The primary structure comprises 514 residues: LWamide neuropeptides (514 aa).

A signal peptide spans 1-22; the sequence is MALKCHLVLLAITLLLAQCSGS. Residues 23–53 show a composition bias toward basic and acidic residues; that stretch reads VDKKDSTTNHLDEKKTDSTEAHIVQETDALK. The propeptide occupies 23 to 75; it reads VDKKDSTTNHLDEKKTDSTEAHIVQETDALKENSYLGAEEESKEEDKKRSAAP. A disordered region spans residues 23–180; the sequence is VDKKDSTTNH…PGLWGRSADA (158 aa). Tryptophan amide is present on residues Trp81 and Trp90. A propeptide spanning residues 93–97 is cleaved from the precursor; sequence SADAG. Trp102 and Trp111 each carry tryptophan amide. The propeptide occupies 114–118; it reads SADAG. A tryptophan amide mark is found at Trp123 and Trp132. Positions 135–139 are excised as a propeptide; that stretch reads SADAG. Tryptophan amide occurs at positions 144 and 153. A propeptide spanning residues 156 to 160 is cleaved from the precursor; that stretch reads SADAG. 2 positions are modified to tryptophan amide: Trp165 and Trp174. A propeptide spanning residues 177-181 is cleaved from the precursor; the sequence is SADAR. A Tryptophan amide modification is found at Trp186. Residues 190–199 constitute a propeptide that is removed on maturation; it reads EIYALWGGKR. Residue Trp205 is modified to Tryptophan amide. The propeptide occupies 208–212; sequence SADPG. Trp217 is modified (tryptophan amide). A propeptide spanning residues 221–230 is cleaved from the precursor; that stretch reads ELVGLWGGKR. Tryptophan amide is present on Trp236. Residues 239–243 constitute a propeptide that is removed on maturation; the sequence is SAEAG. Residues Trp248 and Trp257 each carry the tryptophan amide modification. The interval 258-475 is disordered; sequence GRSADPLQPG…GRSAGSGQLG (218 aa). A propeptide spanning residues 260–264 is cleaved from the precursor; sequence SADPL. A tryptophan amide mark is found at Trp269 and Trp278. The propeptide occupies 281–284; the sequence is SADP. Trp290 and Trp299 each carry tryptophan amide. A propeptide spanning residues 302–305 is cleaved from the precursor; that stretch reads SADP. A tryptophan amide mark is found at Trp311 and Trp320. Positions 323–326 are excised as a propeptide; the sequence is SADP. Residues Trp332 and Trp341 each carry the tryptophan amide modification. Positions 344-347 are excised as a propeptide; sequence SADP. Trp353 is modified (tryptophan amide). Positions 356–366 are excised as a propeptide; the sequence is SPGLWGRSADP. Trp372 carries the post-translational modification Tryptophan amide. Positions 376-387 are excised as a propeptide; it reads QNPGFWGRSADP. 2 positions are modified to tryptophan amide: Trp393 and Trp402. Positions 405 to 408 are excised as a propeptide; the sequence is SADP. Tryptophan amide occurs at positions 414 and 423. A propeptide spanning residues 426–429 is cleaved from the precursor; it reads SADP. 2 positions are modified to tryptophan amide: Trp435 and Trp444. The propeptide occupies 447–450; sequence SADP. Tryptophan amide is present on residues Trp456 and Trp465. Positions 468 to 472 are excised as a propeptide; the sequence is SAGSG. Trp477 and Trp487 each carry tryptophan amide. Residues 489 to 514 form a disordered region; that stretch reads RSAEPPQFEDLEDLKKKSAIPQPKGQ. The propeptide occupies 490–514; that stretch reads SAEPPQFEDLEDLKKKSAIPQPKGQ.

It belongs to the LWamide neuropeptide family.

The protein localises to the secreted. In terms of biological role, metamorphosin A may be part of an internal signaling system involved in control of metamorphosis. The chain is LWamide neuropeptides from Anthopleura elegantissima (Green aggregating anemone).